Consider the following 431-residue polypeptide: 3-phosphoshikimate 1-carboxyvinyltransferase (431 aa).

3 residues coordinate 3-phosphoshikimate: K26, S27, and R31. K26 is a binding site for phosphoenolpyruvate. 2 residues coordinate phosphoenolpyruvate: G99 and R127. 3-phosphoshikimate contacts are provided by S170, S171, Q172, S199, E314, and H343. Position 172 (Q172) interacts with phosphoenolpyruvate. The active-site Proton acceptor is the E314. Residues R347, R388, and K413 each contribute to the phosphoenolpyruvate site.

It belongs to the EPSP synthase family. In terms of assembly, monomer.

The protein localises to the cytoplasm. The catalysed reaction is 3-phosphoshikimate + phosphoenolpyruvate = 5-O-(1-carboxyvinyl)-3-phosphoshikimate + phosphate. It participates in metabolic intermediate biosynthesis; chorismate biosynthesis; chorismate from D-erythrose 4-phosphate and phosphoenolpyruvate: step 6/7. Its function is as follows. Catalyzes the transfer of the enolpyruvyl moiety of phosphoenolpyruvate (PEP) to the 5-hydroxyl of shikimate-3-phosphate (S3P) to produce enolpyruvyl shikimate-3-phosphate and inorganic phosphate. This chain is 3-phosphoshikimate 1-carboxyvinyltransferase, found in Mycobacterium marinum (strain ATCC BAA-535 / M).